The primary structure comprises 953 residues: ALS2 C-terminal-like protein (953 aa).

8 MORN repeats span residues 358–380, 381–403, 409–431, 432–454, 459–481, 483–505, 506–528, and 529–552; these read YEGE…DGRN, HVGD…QASE, YKCH…TSEV, YKGY…PQAP, YTGH…DRGE, YIGM…AGVC, YQGT…DDSL, and YEGT…NGFT. The 147-residue stretch at 796 to 942 folds into the VPS9 domain; sequence LFPDARLLEF…IQKEDMRLHR (147 aa).

In terms of assembly, homodimer. Forms a heteromeric complex with ALS2. Interacts with ALS2 and RAB5A.

The protein resides in the cytoplasm. Its function is as follows. Acts as a guanine nucleotide exchange factor (GEF) for Rab5 GTPase. Regulates the ALS2-mediated endosome dynamics. The sequence is that of ALS2 C-terminal-like protein (ALS2CL) from Bos taurus (Bovine).